A 402-amino-acid chain; its full sequence is Type II NADH:quinone oxidoreductase (402 aa).

Residues 12 to 16, 39 to 40, and Val-83 contribute to the FAD site; these read GAGYA and NK. Residue Glu-172 is part of the active site. FAD-binding positions include Asp-302, 319–320, and Lys-379; that span reads AQ.

The protein belongs to the NADH dehydrogenase family. FAD is required as a cofactor.

The protein localises to the cell membrane. It catalyses the reaction a quinone + NADH + H(+) = a quinol + NAD(+). In terms of biological role, alternative, nonproton pumping NADH:quinone oxidoreductase that delivers electrons to the respiratory chain by oxidation of NADH and reduction of quinones, and contributes to the regeneration of NAD(+). The polypeptide is Type II NADH:quinone oxidoreductase (Staphylococcus epidermidis (strain ATCC 35984 / DSM 28319 / BCRC 17069 / CCUG 31568 / BM 3577 / RP62A)).